Consider the following 305-residue polypeptide: MAPLDLDKYVEIARQCKYLPENDLKRLCDYVCDLLLEESNVQPVSTPVTVCGDIHGQFYDLCELFRTGGQVPDTNYIFMGDFVDRGYYSLETFTYLLALKAKWPDRITLLRGNHESRQITQVYGFYDECQTKYGNANAWRYCTKVFDMLTVAALIDEQILCVHGGLSPDIKTLDQIRTIERNQEIPHKGAFCDLVWSDPEDVDTWAISPRGAGWLFGAKVTNEFVHINNLKLICRAHQLVHEGYKFMFDEKLVTVWSAPNYCYRCGNIASIMVFKDVNTREPKLFRAVPDSERVIPPRTTTPYFL.

Residue Met1 is modified to N-acetylmethionine. Mn(2+)-binding residues include Asp53, His55, Asp81, and Asn113. The Proton donor role is filled by His114. The Mn(2+) site is built by His163 and His237.

The protein belongs to the PPP phosphatase family. PP-6 (PP-V) subfamily. In terms of assembly, protein phosphatase 6 (PP6) holoenzyme is proposed to be a heterotrimeric complex formed by the catalytic subunit, a SAPS domain-containing subunit (PP6R) and an ankyrin repeat-domain containing regulatory subunit (ARS). Interacts with subunits PPP6R1, PPP6R2 and PPP6R3. Interacts with subunit ANKRD28. Interacts with IGBP1. Interacts with MAP3K7. Interacts with NFKBIE. Interacts with TRIM14 and WRNIP1; these interactions positively regulate the RIG-I signaling pathway. The cofactor is Mn(2+). In terms of tissue distribution, ubiquitously expressed in all tissues tested with strongest expression in lung, spleen, liver, kidney and brain. Weaker expression observed in bladder, pancreas, heart and skeletal muscle.

The protein localises to the mitochondrion. It localises to the cytoplasm. It catalyses the reaction O-phospho-L-seryl-[protein] + H2O = L-seryl-[protein] + phosphate. The catalysed reaction is O-phospho-L-threonyl-[protein] + H2O = L-threonyl-[protein] + phosphate. Its function is as follows. Catalytic subunit of protein phosphatase 6 (PP6). PP6 is a component of a signaling pathway regulating cell cycle progression in response to IL2 receptor stimulation. N-terminal domain restricts G1 to S phase progression in cancer cells, in part through control of cyclin D13 During mitosis, regulates spindle positioning. Down-regulates MAP3K7 kinase activation of the IL1 signaling pathway by dephosphorylation of MAP3K7. Acts as a regulator of innate immunity by mediating dephosphorylation CGAS, STING1 and RIGI. Also participates in the innate immune defense against viruses by desphosphorylating RIGI, an essential step that triggers RIGI-mediated signaling activation. Also regulates innate immunity by acting as a negative regulator of the cGAS-STING pathway: mediates dephosphorylation and inactivation of CGAS and STING1. CGAS dephosphorylation at 'Ser-420' impairs its ability to bind GTP, thereby inactivating it. In Mus musculus (Mouse), this protein is Serine/threonine-protein phosphatase 6 catalytic subunit.